The sequence spans 199 residues: dITP/XTP pyrophosphatase (199 aa).

A substrate-binding site is contributed by 7–12 (SANKGK). Residues aspartate 38 and aspartate 73 each coordinate Mg(2+). The Proton acceptor role is filled by aspartate 73. Substrate contacts are provided by residues serine 74, 155-158 (FGYD), lysine 178, and 183-184 (HR).

This sequence belongs to the HAM1 NTPase family. Homodimer. The cofactor is Mg(2+).

It carries out the reaction XTP + H2O = XMP + diphosphate + H(+). The catalysed reaction is dITP + H2O = dIMP + diphosphate + H(+). The enzyme catalyses ITP + H2O = IMP + diphosphate + H(+). Pyrophosphatase that catalyzes the hydrolysis of nucleoside triphosphates to their monophosphate derivatives, with a high preference for the non-canonical purine nucleotides XTP (xanthosine triphosphate), dITP (deoxyinosine triphosphate) and ITP. Seems to function as a house-cleaning enzyme that removes non-canonical purine nucleotides from the nucleotide pool, thus preventing their incorporation into DNA/RNA and avoiding chromosomal lesions. In Aliarcobacter butzleri (strain RM4018) (Arcobacter butzleri), this protein is dITP/XTP pyrophosphatase.